Consider the following 179-residue polypeptide: Large ribosomal subunit protein uL5 (179 aa).

Belongs to the universal ribosomal protein uL5 family. As to quaternary structure, part of the 50S ribosomal subunit; part of the 5S rRNA/L5/L18/L25 subcomplex. Contacts the 5S rRNA and the P site tRNA. Forms a bridge to the 30S subunit in the 70S ribosome.

In terms of biological role, this is one of the proteins that bind and probably mediate the attachment of the 5S RNA into the large ribosomal subunit, where it forms part of the central protuberance. In the 70S ribosome it contacts protein S13 of the 30S subunit (bridge B1b), connecting the 2 subunits; this bridge is implicated in subunit movement. Contacts the P site tRNA; the 5S rRNA and some of its associated proteins might help stabilize positioning of ribosome-bound tRNAs. The polypeptide is Large ribosomal subunit protein uL5 (Acidovorax ebreus (strain TPSY) (Diaphorobacter sp. (strain TPSY))).